The following is a 336-amino-acid chain: MSKHFFLHNEFHWQGRHDAEDGAAGSRVHHVVQQIDYTHIGENPYGVALLGFACDAGVARNKGRIGAKKSPDLIRRALANLAWHSPHPLYDLGTVVCDDDLLESSQQHCAKMIAEVLPSVPVITLGGGHEVAWASFSGLARYFEQHHPEKAPKIGIINFDAHFDLRAFSSSQADIKPSSGTPFNQIQHYCQQQGWDFHYACLGVSKASNTRALFERAEQLNVWFVEDKDLGSVNHDYHLTQLQHFIDDCDYLYLTIDLDVFPAATAPGVSAPAARGVSYDNLAPFLDRILAHRDKLMLADIAEYNPTYDVDSQTARLAARLCWDIANAMNDKLEHQ.

His129, Asp160, His162, Asp164, Asp257, and Asp259 together coordinate Mn(2+).

This sequence belongs to the arginase family. The cofactor is Mn(2+).

The enzyme catalyses N-formimidoyl-L-glutamate + H2O = formamide + L-glutamate. It participates in amino-acid degradation; L-histidine degradation into L-glutamate; L-glutamate from N-formimidoyl-L-glutamate (hydrolase route): step 1/1. Functionally, catalyzes the conversion of N-formimidoyl-L-glutamate to L-glutamate and formamide. The sequence is that of Formimidoylglutamase from Vibrio vulnificus (strain CMCP6).